Here is a 144-residue protein sequence, read N- to C-terminus: Nucleoside diphosphate kinase (144 aa).

Positions 11, 59, 87, 93, 104, and 114 each coordinate ATP. Catalysis depends on His117, which acts as the Pros-phosphohistidine intermediate.

Belongs to the NDK family. As to quaternary structure, homotetramer. Mg(2+) is required as a cofactor.

The protein resides in the cytoplasm. It catalyses the reaction a 2'-deoxyribonucleoside 5'-diphosphate + ATP = a 2'-deoxyribonucleoside 5'-triphosphate + ADP. The enzyme catalyses a ribonucleoside 5'-diphosphate + ATP = a ribonucleoside 5'-triphosphate + ADP. In terms of biological role, major role in the synthesis of nucleoside triphosphates other than ATP. The ATP gamma phosphate is transferred to the NDP beta phosphate via a ping-pong mechanism, using a phosphorylated active-site intermediate. This Aliivibrio salmonicida (strain LFI1238) (Vibrio salmonicida (strain LFI1238)) protein is Nucleoside diphosphate kinase.